The following is a 54-amino-acid chain: Lectin alpha-1 chain (54 aa).

This sequence belongs to the leguminous lectin family. As to quaternary structure, tetramer of two alpha and two beta chains.

This chain is Lectin alpha-1 chain, found in Lathyrus hirsutus (Rough pea).